The chain runs to 82 residues: Small ribosomal subunit protein bS18 (82 aa).

Positions 1 to 20 (MVDINQIPTRRPFHRRHKTC) are disordered.

It belongs to the bacterial ribosomal protein bS18 family. Part of the 30S ribosomal subunit. Forms a tight heterodimer with protein bS6.

Functionally, binds as a heterodimer with protein bS6 to the central domain of the 16S rRNA, where it helps stabilize the platform of the 30S subunit. In Brucella suis (strain ATCC 23445 / NCTC 10510), this protein is Small ribosomal subunit protein bS18.